The following is a 210-amino-acid chain: Large ribosomal subunit protein uL4 (210 aa).

Residues 41–52 show a composition bias toward polar residues; the sequence is QTNARQGTASTK. Residues 41 to 71 form a disordered region; sequence QTNARQGTASTKTRAEVRGGGRKPWRQKGTG. Residues 60–71 show a composition bias toward basic residues; it reads GGRKPWRQKGTG.

This sequence belongs to the universal ribosomal protein uL4 family. Part of the 50S ribosomal subunit.

In terms of biological role, one of the primary rRNA binding proteins, this protein initially binds near the 5'-end of the 23S rRNA. It is important during the early stages of 50S assembly. It makes multiple contacts with different domains of the 23S rRNA in the assembled 50S subunit and ribosome. Functionally, forms part of the polypeptide exit tunnel. This chain is Large ribosomal subunit protein uL4, found in Nostoc sp. (strain PCC 7120 / SAG 25.82 / UTEX 2576).